A 479-amino-acid polypeptide reads, in one-letter code: Cysteine protease effector 1 (479 aa).

The protein is Cysteine protease effector 1 of Escherichia coli O1:K1:H7 (strain ATCC 11775 / DSM 30083 / JCM 1649 / NBRC 102203 / NCTC 9001 / U5/41).